A 153-amino-acid chain; its full sequence is uncharacterized protein (153 aa).

Residues 1 to 18 (MSARISKQLRLSVPPCLA) form the signal peptide. N-linked (GlcNAc...) asparagine glycans are attached at residues Asn19 and Asn25. The Extracellular segment spans residues 19–43 (NRTTASNSSSCVTEVEPLLQSFSST). Residues 44–64 (LVLIVLATVIFCLVVLSLSTF) traverse the membrane as a helical segment. The Cytoplasmic segment spans residues 65–153 (HMHKSKMKKR…EHLQQSVVLS (89 aa)). Positions 75–115 (KIEKAQEEYERDHCSPKAERGHLHGMGRGGTHGSPTSPTIQ) are disordered. The span at 77-96 (EKAQEEYERDHCSPKAERGH) shows a compositional bias: basic and acidic residues.

The protein localises to the membrane. This is an uncharacterized protein from Xenopus tropicalis (Western clawed frog).